A 302-amino-acid chain; its full sequence is Glutaminase (302 aa).

Serine 61, asparagine 111, glutamate 155, asparagine 162, tyrosine 186, tyrosine 238, and valine 256 together coordinate substrate.

Belongs to the glutaminase family. As to quaternary structure, homotetramer.

It carries out the reaction L-glutamine + H2O = L-glutamate + NH4(+). This Pseudomonas paraeruginosa (strain DSM 24068 / PA7) (Pseudomonas aeruginosa (strain PA7)) protein is Glutaminase.